A 938-amino-acid polypeptide reads, in one-letter code: Isoleucine--tRNA ligase (938 aa).

A 'HIGH' region motif is present at residues 58–68 (PYANGSIHIGH). At Lys-183 the chain carries N6-acetyllysine. Glu-561 lines the L-isoleucyl-5'-AMP pocket. A 'KMSKS' region motif is present at residues 602 to 606 (KMSKS). Lys-605 contacts ATP. Residues Cys-901, Cys-904, Cys-921, and Cys-924 each coordinate Zn(2+).

Belongs to the class-I aminoacyl-tRNA synthetase family. IleS type 1 subfamily. As to quaternary structure, monomer. Zn(2+) is required as a cofactor.

The protein localises to the cytoplasm. The enzyme catalyses tRNA(Ile) + L-isoleucine + ATP = L-isoleucyl-tRNA(Ile) + AMP + diphosphate. In terms of biological role, catalyzes the attachment of isoleucine to tRNA(Ile). As IleRS can inadvertently accommodate and process structurally similar amino acids such as valine, to avoid such errors it has two additional distinct tRNA(Ile)-dependent editing activities. One activity is designated as 'pretransfer' editing and involves the hydrolysis of activated Val-AMP. The other activity is designated 'posttransfer' editing and involves deacylation of mischarged Val-tRNA(Ile). The sequence is that of Isoleucine--tRNA ligase from Escherichia coli O17:K52:H18 (strain UMN026 / ExPEC).